The primary structure comprises 435 residues: Asparagine--tRNA ligase (435 aa).

The protein belongs to the class-II aminoacyl-tRNA synthetase family. Homodimer.

The protein localises to the cytoplasm. The enzyme catalyses tRNA(Asn) + L-asparagine + ATP = L-asparaginyl-tRNA(Asn) + AMP + diphosphate + H(+). The protein is Asparagine--tRNA ligase of Leptospira interrogans serogroup Icterohaemorrhagiae serovar Lai (strain 56601).